The chain runs to 241 residues: Ribonuclease PH (241 aa).

Phosphate-binding positions include Arg-89 and 127–129 (GTR).

It belongs to the RNase PH family. As to quaternary structure, homohexameric ring arranged as a trimer of dimers.

It carries out the reaction tRNA(n+1) + phosphate = tRNA(n) + a ribonucleoside 5'-diphosphate. In terms of biological role, phosphorolytic 3'-5' exoribonuclease that plays an important role in tRNA 3'-end maturation. Removes nucleotide residues following the 3'-CCA terminus of tRNAs; can also add nucleotides to the ends of RNA molecules by using nucleoside diphosphates as substrates, but this may not be physiologically important. Probably plays a role in initiation of 16S rRNA degradation (leading to ribosome degradation) during starvation. This chain is Ribonuclease PH, found in Xanthomonas oryzae pv. oryzae (strain MAFF 311018).